A 610-amino-acid chain; its full sequence is All-trans-retinol 13,14-reductase (610 aa).

The signal sequence occupies residues 1–18 (MWLPLVLFLAVLLLAVVC).

It belongs to the carotenoid/retinoid oxidoreductase family. CrtISO subfamily. The cofactor is NAD(+). Requires NADP(+) as cofactor. FAD serves as cofactor.

It is found in the endoplasmic reticulum membrane. It carries out the reaction all-trans-13,14-dihydroretinol + A = all-trans-retinol + AH2. Its function is as follows. Catalyzes the saturation of all-trans-retinol to all-trans-13,14-dihydroretinol. Does not exhibit any activity toward all-trans-retinoic acid, nor 9-cis, 11-cis or 13-cis-retinol isomers. May play a role in the metabolism of vitamin A. Independently of retinol conversion, may regulate liver metabolism upstream of MLXIPL/ChREBP. May play a role in adipocyte differentiation. The protein is All-trans-retinol 13,14-reductase (RETSAT) of Macaca fascicularis (Crab-eating macaque).